The chain runs to 666 residues: Transketolase (666 aa).

H28 is a binding site for substrate. Thiamine diphosphate-binding positions include H68 and 116–118 (GPL). D157 is a binding site for Mg(2+). G158 and N187 together coordinate thiamine diphosphate. Residues N187 and I189 each coordinate Mg(2+). Substrate is bound by residues H262, R356, and S383. H262 is a thiamine diphosphate binding site. E410 serves as the catalytic Proton donor. F436 is a thiamine diphosphate binding site. Positions 460, 468, and 519 each coordinate substrate.

Belongs to the transketolase family. As to quaternary structure, homodimer. Mg(2+) is required as a cofactor. The cofactor is Ca(2+). Requires Mn(2+) as cofactor. Co(2+) serves as cofactor. It depends on thiamine diphosphate as a cofactor.

The enzyme catalyses D-sedoheptulose 7-phosphate + D-glyceraldehyde 3-phosphate = aldehydo-D-ribose 5-phosphate + D-xylulose 5-phosphate. Its function is as follows. Catalyzes the transfer of a two-carbon ketol group from a ketose donor to an aldose acceptor, via a covalent intermediate with the cofactor thiamine pyrophosphate. The chain is Transketolase (tkt) from Halalkalibacterium halodurans (strain ATCC BAA-125 / DSM 18197 / FERM 7344 / JCM 9153 / C-125) (Bacillus halodurans).